We begin with the raw amino-acid sequence, 732 residues long: 1,4-alpha-glucan branching enzyme GlgB (732 aa).

The Nucleophile role is filled by D408. The active-site Proton donor is the E461.

This sequence belongs to the glycosyl hydrolase 13 family. GlgB subfamily. In terms of assembly, monomer.

It carries out the reaction Transfers a segment of a (1-&gt;4)-alpha-D-glucan chain to a primary hydroxy group in a similar glucan chain.. The protein operates within glycan biosynthesis; glycogen biosynthesis. Functionally, catalyzes the formation of the alpha-1,6-glucosidic linkages in glycogen by scission of a 1,4-alpha-linked oligosaccharide from growing alpha-1,4-glucan chains and the subsequent attachment of the oligosaccharide to the alpha-1,6 position. The sequence is that of 1,4-alpha-glucan branching enzyme GlgB from Rhodococcus jostii (strain RHA1).